A 75-amino-acid polypeptide reads, in one-letter code: Cytochrome c oxidase subunit 6C (75 aa).

The Mitochondrial matrix segment spans residues 1 to 13 (MSSGALTKPQMRG). A helical membrane pass occupies residues 14–54 (LLAKRLRFHIVGAFAVSLGVAAFYKFAVAEPRKKAYADFYR). The Mitochondrial intermembrane portion of the chain corresponds to 55-75 (NYDSMKDFEEMRKAGIFQSAK).

Belongs to the cytochrome c oxidase subunit 6c family. As to quaternary structure, component of the cytochrome c oxidase (complex IV, CIV), a multisubunit enzyme composed of 14 subunits. The complex is composed of a catalytic core of 3 subunits MT-CO1, MT-CO2 and MT-CO3, encoded in the mitochondrial DNA, and 11 supernumerary subunits COX4I, COX5A, COX5B, COX6A, COX6B, COX6C, COX7A, COX7B, COX7C, COX8 and NDUFA4, which are encoded in the nuclear genome. The complex exists as a monomer or a dimer and forms supercomplexes (SCs) in the inner mitochondrial membrane with NADH-ubiquinone oxidoreductase (complex I, CI) and ubiquinol-cytochrome c oxidoreductase (cytochrome b-c1 complex, complex III, CIII), resulting in different assemblies (supercomplex SCI(1)III(2)IV(1) and megacomplex MCI(2)III(2)IV(2)).

Its subcellular location is the mitochondrion inner membrane. It functions in the pathway energy metabolism; oxidative phosphorylation. Functionally, component of the cytochrome c oxidase, the last enzyme in the mitochondrial electron transport chain which drives oxidative phosphorylation. The respiratory chain contains 3 multisubunit complexes succinate dehydrogenase (complex II, CII), ubiquinol-cytochrome c oxidoreductase (cytochrome b-c1 complex, complex III, CIII) and cytochrome c oxidase (complex IV, CIV), that cooperate to transfer electrons derived from NADH and succinate to molecular oxygen, creating an electrochemical gradient over the inner membrane that drives transmembrane transport and the ATP synthase. Cytochrome c oxidase is the component of the respiratory chain that catalyzes the reduction of oxygen to water. Electrons originating from reduced cytochrome c in the intermembrane space (IMS) are transferred via the dinuclear copper A center (CU(A)) of subunit 2 and heme A of subunit 1 to the active site in subunit 1, a binuclear center (BNC) formed by heme A3 and copper B (CU(B)). The BNC reduces molecular oxygen to 2 water molecules using 4 electrons from cytochrome c in the IMS and 4 protons from the mitochondrial matrix. The protein is Cytochrome c oxidase subunit 6C (COX6C) of Carlito syrichta (Philippine tarsier).